A 639-amino-acid polypeptide reads, in one-letter code: Chaperone protein DnaK (639 aa).

Threonine 198 carries the post-translational modification Phosphothreonine; by autocatalysis. Residues 602 to 639 (QAKSQAQGGDNADAGKQANATADDVVDAEFEEVKDDKK) are disordered. Positions 625–639 (DVVDAEFEEVKDDKK) are enriched in acidic residues.

This sequence belongs to the heat shock protein 70 family.

Functionally, acts as a chaperone. In Shewanella baltica (strain OS195), this protein is Chaperone protein DnaK.